We begin with the raw amino-acid sequence, 190 residues long: Protein GrpE (190 aa).

Residues 1–31 are compositionally biased toward basic and acidic residues; the sequence is MTEEQKKYEDAENLESKSENPEEASAEKSEN. The tract at residues 1-39 is disordered; that stretch reads MTEEQKKYEDAENLESKSENPEEASAEKSENGVEDLQAE.

This sequence belongs to the GrpE family. In terms of assembly, homodimer.

Its subcellular location is the cytoplasm. Participates actively in the response to hyperosmotic and heat shock by preventing the aggregation of stress-denatured proteins, in association with DnaK and GrpE. It is the nucleotide exchange factor for DnaK and may function as a thermosensor. Unfolded proteins bind initially to DnaJ; upon interaction with the DnaJ-bound protein, DnaK hydrolyzes its bound ATP, resulting in the formation of a stable complex. GrpE releases ADP from DnaK; ATP binding to DnaK triggers the release of the substrate protein, thus completing the reaction cycle. Several rounds of ATP-dependent interactions between DnaJ, DnaK and GrpE are required for fully efficient folding. The polypeptide is Protein GrpE (Zymomonas mobilis subsp. mobilis (strain ATCC 31821 / ZM4 / CP4)).